Here is a 194-residue protein sequence, read N- to C-terminus: Xanthine phosphoribosyltransferase (194 aa).

Positions 20 and 27 each coordinate xanthine. 5-phospho-alpha-D-ribose 1-diphosphate is bound at residue 128–132 (ANGCA). Xanthine is bound at residue K156.

The protein belongs to the purine/pyrimidine phosphoribosyltransferase family. Xpt subfamily. In terms of assembly, homodimer.

The protein localises to the cytoplasm. The catalysed reaction is XMP + diphosphate = xanthine + 5-phospho-alpha-D-ribose 1-diphosphate. Its pathway is purine metabolism; XMP biosynthesis via salvage pathway; XMP from xanthine: step 1/1. In terms of biological role, converts the preformed base xanthine, a product of nucleic acid breakdown, to xanthosine 5'-monophosphate (XMP), so it can be reused for RNA or DNA synthesis. This chain is Xanthine phosphoribosyltransferase, found in Lachnoclostridium phytofermentans (strain ATCC 700394 / DSM 18823 / ISDg) (Clostridium phytofermentans).